Consider the following 337-residue polypeptide: MKSIGINGYGTIGKRVADAVSAQDDMKIVGVTKRTPDYEAKAAVEKGYDLYISVPERESQFEEAGIEVAGTADELFEKLDLVVDCTPGGIGAQNKTDIYEKIGLKAIFEGGEDHDAIGSSFNAEANYADNIGEDYVRVVSCNTTGLCRTLKPIYDISGIKKVRAVMVRRGADPSDVKKGPINSIVPTTEVPSHHGPDVQTIIDDINVMTMALLVPTTLMHTHNIMVELEDKITTDDVLDAFENAHRVLPVQKSLKLGSTAEIMEYAKDLGRSRGDMYEIPVWKESVNIENGELFYMQAVHQESDVVPENVDAIRAMLELEEDGEKSILKTNKAMGIL.

NAD(+) contacts are provided by residues 11-12 (TI) and Gly-111. 140 to 142 (SCN) is a binding site for D-glyceraldehyde 3-phosphate. The active-site Nucleophile is Cys-141. NAD(+) is bound at residue Arg-169. Residues 177-196 (KKGPINSIVPTTEVPSHHGP) form a disordered region. 194–195 (HG) is a binding site for D-glyceraldehyde 3-phosphate. Gln-301 is an NAD(+) binding site.

Belongs to the glyceraldehyde-3-phosphate dehydrogenase family. As to quaternary structure, homotetramer.

It is found in the cytoplasm. It catalyses the reaction D-glyceraldehyde 3-phosphate + phosphate + NADP(+) = (2R)-3-phospho-glyceroyl phosphate + NADPH + H(+). The enzyme catalyses D-glyceraldehyde 3-phosphate + phosphate + NAD(+) = (2R)-3-phospho-glyceroyl phosphate + NADH + H(+). It functions in the pathway carbohydrate degradation; glycolysis; pyruvate from D-glyceraldehyde 3-phosphate: step 1/5. The chain is Glyceraldehyde-3-phosphate dehydrogenase from Methanosphaera stadtmanae (strain ATCC 43021 / DSM 3091 / JCM 11832 / MCB-3).